A 255-amino-acid chain; its full sequence is PHD finger protein ALFIN-LIKE 4 (255 aa).

Residue methionine 1 is modified to N-acetylmethionine. The tract at residues glycine 145–threonine 200 is disordered. Over residues serine 150–lysine 160 the composition is skewed to low complexity. Residues arginine 165 to proline 178 show a composition bias toward basic and acidic residues. Over residues lysine 179–glycine 198 the composition is skewed to acidic residues. A PHD-type zinc finger spans residues glutamate 199–lysine 251.

Belongs to the Alfin family. Interacts with H3K4me3 and to a lesser extent with H3K4me2. In terms of tissue distribution, ubiquitously expressed.

The protein resides in the nucleus. Functionally, histone-binding component that specifically recognizes H3 tails trimethylated on 'Lys-4' (H3K4me3), which mark transcription start sites of virtually all active genes. This Arabidopsis thaliana (Mouse-ear cress) protein is PHD finger protein ALFIN-LIKE 4 (AL4).